Reading from the N-terminus, the 40-residue chain is Photosystem II reaction center protein J (40 aa).

The helical transmembrane segment at 8–28 threads the bilayer; sequence IPLWIIGTVAGILVIGLVGVF.

Belongs to the PsbJ family. PSII is composed of 1 copy each of membrane proteins PsbA, PsbB, PsbC, PsbD, PsbE, PsbF, PsbH, PsbI, PsbJ, PsbK, PsbL, PsbM, PsbT, PsbX, PsbY, PsbZ, Psb30/Ycf12, at least 3 peripheral proteins of the oxygen-evolving complex and a large number of cofactors. It forms dimeric complexes.

The protein resides in the plastid. The protein localises to the chloroplast thylakoid membrane. One of the components of the core complex of photosystem II (PSII). PSII is a light-driven water:plastoquinone oxidoreductase that uses light energy to abstract electrons from H(2)O, generating O(2) and a proton gradient subsequently used for ATP formation. It consists of a core antenna complex that captures photons, and an electron transfer chain that converts photonic excitation into a charge separation. This Helianthus annuus (Common sunflower) protein is Photosystem II reaction center protein J.